The primary structure comprises 290 residues: 4-hydroxy-tetrahydrodipicolinate synthase (290 aa).

T44 serves as a coordination point for pyruvate. Y132 functions as the Proton donor/acceptor in the catalytic mechanism. K160 (schiff-base intermediate with substrate) is an active-site residue. I202 contributes to the pyruvate binding site.

It belongs to the DapA family. In terms of assembly, homotetramer; dimer of dimers.

It localises to the cytoplasm. It catalyses the reaction L-aspartate 4-semialdehyde + pyruvate = (2S,4S)-4-hydroxy-2,3,4,5-tetrahydrodipicolinate + H2O + H(+). It functions in the pathway amino-acid biosynthesis; L-lysine biosynthesis via DAP pathway; (S)-tetrahydrodipicolinate from L-aspartate: step 3/4. Its function is as follows. Catalyzes the condensation of (S)-aspartate-beta-semialdehyde [(S)-ASA] and pyruvate to 4-hydroxy-tetrahydrodipicolinate (HTPA). This Legionella pneumophila subsp. pneumophila (strain Philadelphia 1 / ATCC 33152 / DSM 7513) protein is 4-hydroxy-tetrahydrodipicolinate synthase.